The chain runs to 245 residues: MRVDGREKTELRHIHIHTNYLKHPEGSVLIEVGDTKVICSATIEERVPPFMRGEGKGWVTAEYAMIPRATEQRTIRESSKGKVTGRTMEIQRLIGRALRAVVDLEALGERTVWIDCDVIQADGGTRTASITGAYVAMVLAFEKLLQAEKVSKIPVKDYLAATSVGIVEEQGVVLDLNYAEDSKADVDMNVIMTGKGQFVEVQGTGEEATFSRAQLNELLDAAEQGIFQLIDMQKEALGDIVSHIE.

Phosphate is bound by residues Arg86 and 124 to 126 (GTR).

Belongs to the RNase PH family. In terms of assembly, homohexameric ring arranged as a trimer of dimers.

It catalyses the reaction tRNA(n+1) + phosphate = tRNA(n) + a ribonucleoside 5'-diphosphate. In terms of biological role, phosphorolytic 3'-5' exoribonuclease that plays an important role in tRNA 3'-end maturation. Removes nucleotide residues following the 3'-CCA terminus of tRNAs; can also add nucleotides to the ends of RNA molecules by using nucleoside diphosphates as substrates, but this may not be physiologically important. Probably plays a role in initiation of 16S rRNA degradation (leading to ribosome degradation) during starvation. The chain is Ribonuclease PH from Bacillus cereus (strain ATCC 10987 / NRS 248).